A 245-amino-acid chain; its full sequence is 1-(5-phosphoribosyl)-5-[(5-phosphoribosylamino)methylideneamino] imidazole-4-carboxamide isomerase (245 aa).

Asp7 functions as the Proton acceptor in the catalytic mechanism. The Proton donor role is filled by Asp129.

The protein belongs to the HisA/HisF family.

It is found in the cytoplasm. It catalyses the reaction 1-(5-phospho-beta-D-ribosyl)-5-[(5-phospho-beta-D-ribosylamino)methylideneamino]imidazole-4-carboxamide = 5-[(5-phospho-1-deoxy-D-ribulos-1-ylimino)methylamino]-1-(5-phospho-beta-D-ribosyl)imidazole-4-carboxamide. The protein operates within amino-acid biosynthesis; L-histidine biosynthesis; L-histidine from 5-phospho-alpha-D-ribose 1-diphosphate: step 4/9. This is 1-(5-phosphoribosyl)-5-[(5-phosphoribosylamino)methylideneamino] imidazole-4-carboxamide isomerase from Aliivibrio salmonicida (strain LFI1238) (Vibrio salmonicida (strain LFI1238)).